Reading from the N-terminus, the 136-residue chain is Transmembrane protein 203 (136 aa).

Transmembrane regions (helical) follow at residues 14-34 (FAQL…VLLA), 50-72 (FIPF…VRLF), 81-101 (VLRL…EMLL), and 112-132 (LWFG…MIRA).

It is found in the endoplasmic reticulum membrane. It localises to the endoplasmic reticulum-Golgi intermediate compartment. Functionally, involved in the regulation of cellular calcium homeotasis. May act as a regulator of STING-mediated inflammatory signaling in macrophages. The sequence is that of Transmembrane protein 203 (tmem203) from Xenopus tropicalis (Western clawed frog).